The primary structure comprises 170 residues: Adenine phosphoribosyltransferase (170 aa).

Belongs to the purine/pyrimidine phosphoribosyltransferase family. In terms of assembly, homodimer.

It is found in the cytoplasm. It carries out the reaction AMP + diphosphate = 5-phospho-alpha-D-ribose 1-diphosphate + adenine. Its pathway is purine metabolism; AMP biosynthesis via salvage pathway; AMP from adenine: step 1/1. Catalyzes a salvage reaction resulting in the formation of AMP, that is energically less costly than de novo synthesis. The protein is Adenine phosphoribosyltransferase of Bacillus anthracis (strain A0248).